The sequence spans 1018 residues: Transmembrane protein 132A (1018 aa).

An N-terminal signal peptide occupies residues 1–32 (MTERKAAAPRGPYGAWFCLLVALALEVVRVSS). Topologically, residues 33–846 (NHDTLDPIYL…VTDLELGMYA (814 aa)) are extracellular. An N-linked (GlcNAc...) asparagine glycan is attached at asparagine 276. A binds to HSPA5/GRP78 region spans residues 606–911 (IEVRSPLSDA…QLDRCSSSGP (306 aa)). Positions 666–1018 (LPAPKQEVAL…NYMERIRGSS (353 aa)) are confers cellular localization similar to full-length form. The span at 807-818 (ERAEEEAGKEEN) shows a compositional bias: basic and acidic residues. A disordered region spans residues 807-833 (ERAEEEAGKEENEAKEEEEDEEEMVPA). Over residues 819 to 830 (EAKEEEEDEEEM) the composition is skewed to acidic residues. A helical membrane pass occupies residues 847–867 (LLGIFCLAILIFLVNGVVFVL). Residues 868 to 1018 (RYQRKEPPDS…NYMERIRGSS (151 aa)) are Cytoplasmic-facing. The segment at 900–956 (SRQLDRCSSSGPPKGEGGCPCESGAGGDASTVAPSASESPAGSSSTLARKEAGGRRK) is disordered. 2 stretches are compositionally biased toward low complexity: residues 906 to 922 (CSSSGPPKGEGGCPCES) and 932 to 944 (APSASESPAGSSS).

It belongs to the TMEM132 family. In terms of assembly, interacts with HSPA5/GRP78.

It localises to the golgi apparatus membrane. The protein localises to the endoplasmic reticulum membrane. Its function is as follows. May play a role in embryonic and postnatal development of the brain. Increased resistance to cell death induced by serum starvation in cultured cells. Regulates cAMP-induced GFAP gene expression via STAT3 phosphorylation. The polypeptide is Transmembrane protein 132A (Tmem132a) (Mus musculus (Mouse)).